A 712-amino-acid polypeptide reads, in one-letter code: Ribosomal RNA large subunit methyltransferase K/L (712 aa).

A THUMP domain is found at 46-157 (GAYQALLHSR…RENMVVSLDL (112 aa)).

This sequence belongs to the methyltransferase superfamily. RlmKL family.

Its subcellular location is the cytoplasm. It catalyses the reaction guanosine(2445) in 23S rRNA + S-adenosyl-L-methionine = N(2)-methylguanosine(2445) in 23S rRNA + S-adenosyl-L-homocysteine + H(+). The catalysed reaction is guanosine(2069) in 23S rRNA + S-adenosyl-L-methionine = N(2)-methylguanosine(2069) in 23S rRNA + S-adenosyl-L-homocysteine + H(+). In terms of biological role, specifically methylates the guanine in position 2445 (m2G2445) and the guanine in position 2069 (m7G2069) of 23S rRNA. The polypeptide is Ribosomal RNA large subunit methyltransferase K/L (Actinobacillus pleuropneumoniae serotype 3 (strain JL03)).